The primary structure comprises 700 residues: Polyribonucleotide nucleotidyltransferase (700 aa).

Mg(2+) is bound by residues D491 and D497. The KH domain occupies 558 to 617 (PNYAVIEINPDKIRDVIGKGGATIRQLTEETGAVIDIDDAGTIRIFGENKAATKAAIAKI). In terms of domain architecture, S1 motif spans 627 to 695 (GKTYEGTVAR…NRGRIKLTMK (69 aa)).

This sequence belongs to the polyribonucleotide nucleotidyltransferase family. As to quaternary structure, component of the RNA degradosome, which is a multiprotein complex involved in RNA processing and mRNA degradation. Requires Mg(2+) as cofactor.

It localises to the cytoplasm. It catalyses the reaction RNA(n+1) + phosphate = RNA(n) + a ribonucleoside 5'-diphosphate. Its function is as follows. Involved in mRNA degradation. Catalyzes the phosphorolysis of single-stranded polyribonucleotides processively in the 3'- to 5'-direction. In Psychrobacter cryohalolentis (strain ATCC BAA-1226 / DSM 17306 / VKM B-2378 / K5), this protein is Polyribonucleotide nucleotidyltransferase.